A 694-amino-acid chain; its full sequence is Outer dynein arm-docking complex subunit 1 (694 aa).

Coiled-coil stretches lie at residues 27-192 and 222-259; these read ELSR…RYLN and REEAKTKMGMLQERAEKELAQSDTEAQILLRQISHLEQ. The tract at residues 271–290 is disordered; sequence RQPDPGVVQKEEQRAWETSE. The stretch at 339 to 418 forms a coiled coil; sequence NFINEQNSEL…EKIKTDIQVL (80 aa). 2 disordered regions span residues 531–550 and 571–694; these read QDEEGSPKKRDSSPSLTLSS and SILS…RGYN. A phosphoserine mark is found at serine 536, serine 542, serine 543, and serine 545. The span at 628–642 shows a compositional bias: low complexity; the sequence is TSSSSYLGSTGYLET. The segment covering 655–672 has biased composition (polar residues); it reads SQSMGSEMSRGFSSGSGQ. The span at 673 to 687 shows a compositional bias: low complexity; the sequence is TSSAAPASRPSSATS.

This sequence belongs to the ODA1/DCC2 family. Component of the outer dynein arm-docking complex along with ODAD2, ODAD3, ODAD4 and CLXN. Interacts with ODAD3. Interacts with ODAD4; this interaction may facilitate the recruitment and/or attachment of outer dynein arm docking complex proteins,including ODAD1, ODAD3, and ODAD4 to ciliary axonemes. Interacts with DNAH9. Interacts with MNS1. Interacts with PIERCE1 and PIERCE2; the interactions link the outer dynein arms docking complex (ODA-DC) to the internal microtubule inner proteins (MIP) in cilium axoneme.

The protein localises to the cytoplasm. Its subcellular location is the cytoskeleton. It localises to the cilium axoneme. Functionally, component of the outer dynein arm-docking complex that mediates outer dynein arms (ODA) binding onto the doublet microtubule. Involved in mediating assembly of both ODAs and their axonemal docking complex onto ciliary microtubules. The protein is Outer dynein arm-docking complex subunit 1 (Odad1) of Rattus norvegicus (Rat).